A 257-amino-acid chain; its full sequence is Imidazole glycerol phosphate synthase subunit HisF (257 aa).

Active-site residues include D11 and D130.

Belongs to the HisA/HisF family. Heterodimer of HisH and HisF.

The protein resides in the cytoplasm. The catalysed reaction is 5-[(5-phospho-1-deoxy-D-ribulos-1-ylimino)methylamino]-1-(5-phospho-beta-D-ribosyl)imidazole-4-carboxamide + L-glutamine = D-erythro-1-(imidazol-4-yl)glycerol 3-phosphate + 5-amino-1-(5-phospho-beta-D-ribosyl)imidazole-4-carboxamide + L-glutamate + H(+). It participates in amino-acid biosynthesis; L-histidine biosynthesis; L-histidine from 5-phospho-alpha-D-ribose 1-diphosphate: step 5/9. In terms of biological role, IGPS catalyzes the conversion of PRFAR and glutamine to IGP, AICAR and glutamate. The HisF subunit catalyzes the cyclization activity that produces IGP and AICAR from PRFAR using the ammonia provided by the HisH subunit. This is Imidazole glycerol phosphate synthase subunit HisF from Bradyrhizobium diazoefficiens (strain JCM 10833 / BCRC 13528 / IAM 13628 / NBRC 14792 / USDA 110).